The chain runs to 123 residues: Small ribosomal subunit protein uS12cz/uS12cy (123 aa).

This sequence belongs to the universal ribosomal protein uS12 family. As to quaternary structure, part of the 30S ribosomal subunit.

The protein resides in the plastid. It is found in the chloroplast. Functionally, with S4 and S5 plays an important role in translational accuracy. Located at the interface of the 30S and 50S subunits. In Gossypium hirsutum (Upland cotton), this protein is Small ribosomal subunit protein uS12cz/uS12cy (rps12-A).